The sequence spans 439 residues: Maintenance of mitochondrial morphology protein 1 (439 aa).

Topologically, residues 1-76 (MSQDLIETTA…NGNTWSFTQG (76 aa)) are lumenal. The chain crosses the membrane as a helical span at residues 77–97 (LVIGQVSVIFIIIVFVKFFVF). At 98–439 (ADSSSHIPTK…TPGEYVNSNI (342 aa)) the chain is on the cytoplasmic side. Disordered stretches follow at residues 125-145 (KHSN…SLDS), 309-336 (MNGY…DGGT), and 405-425 (REPV…GTSA). Residues 165–395 (ASESLDWFNV…EPRFQVVRLP (231 aa)) form the SMP-LTD domain. Low complexity-rich tracts occupy residues 315 to 326 (ENANGDGASSSN) and 410 to 424 (KKTT…NGTS).

The protein belongs to the MMM1 family. Homodimer. Component of the ER-mitochondria encounter structure (ERMES) or MDM complex, composed of MMM1, MDM10, MDM12 and MDM34. An MMM1 homodimer associates with one molecule of MDM12 on each side in a pairwise head-to-tail manner, and the SMP-LTD domains of MMM1 and MDM12 generate a continuous hydrophobic tunnel for phospholipid trafficking.

It is found in the endoplasmic reticulum membrane. In terms of biological role, component of the ERMES/MDM complex, which serves as a molecular tether to connect the endoplasmic reticulum (ER) and mitochondria. Components of this complex are involved in the control of mitochondrial shape and protein biogenesis, and function in nonvesicular lipid trafficking between the ER and mitochondria. The MDM12-MMM1 subcomplex functions in the major beta-barrel assembly pathway that is responsible for biogenesis of all outer membrane beta-barrel proteins, and acts in a late step after the SAM complex. The MDM10-MDM12-MMM1 subcomplex further acts in the TOM40-specific pathway after the action of the MDM12-MMM1 complex. Essential for establishing and maintaining the structure of mitochondria and maintenance of mtDNA nucleoids. The polypeptide is Maintenance of mitochondrial morphology protein 1 (Candida albicans (strain WO-1) (Yeast)).